We begin with the raw amino-acid sequence, 728 residues long: Catalase-peroxidase 1 (728 aa).

Residues 91-218 (WHSAGTYRIA…LAAVQMGLIY (128 aa)) constitute a cross-link (tryptophyl-tyrosyl-methioninium (Trp-Tyr) (with M-244)). His92 serves as the catalytic Proton acceptor. The segment at residues 218 to 244 (YVNPEGPDGNPDPVAAARDIRDTFARM) is a cross-link (tryptophyl-tyrosyl-methioninium (Tyr-Met) (with W-91)). His259 lines the heme b pocket.

Belongs to the peroxidase family. Peroxidase/catalase subfamily. Homodimer or homotetramer. Requires heme b as cofactor. In terms of processing, formation of the three residue Trp-Tyr-Met cross-link is important for the catalase, but not the peroxidase activity of the enzyme.

The enzyme catalyses H2O2 + AH2 = A + 2 H2O. It catalyses the reaction 2 H2O2 = O2 + 2 H2O. In terms of biological role, bifunctional enzyme with both catalase and broad-spectrum peroxidase activity. The sequence is that of Catalase-peroxidase 1 from Burkholderia ambifaria (strain ATCC BAA-244 / DSM 16087 / CCUG 44356 / LMG 19182 / AMMD) (Burkholderia cepacia (strain AMMD)).